We begin with the raw amino-acid sequence, 736 residues long: Phosphoribosylformylglycinamidine synthase subunit PurL (736 aa).

H48 is an active-site residue. Y51 and K90 together coordinate ATP. E92 contributes to the Mg(2+) binding site. Residues 93–96 (SHNH) and R115 contribute to the substrate site. H94 functions as the Proton acceptor in the catalytic mechanism. A Mg(2+)-binding site is contributed by D116. Position 239 (Q239) interacts with substrate. D267 lines the Mg(2+) pocket. Residue 311-313 (ESQ) participates in substrate binding. ATP contacts are provided by D492 and G529. N530 is a Mg(2+) binding site. A substrate-binding site is contributed by S532.

Belongs to the FGAMS family. As to quaternary structure, monomer. Part of the FGAM synthase complex composed of 1 PurL, 1 PurQ and 2 PurS subunits.

It is found in the cytoplasm. The enzyme catalyses N(2)-formyl-N(1)-(5-phospho-beta-D-ribosyl)glycinamide + L-glutamine + ATP + H2O = 2-formamido-N(1)-(5-O-phospho-beta-D-ribosyl)acetamidine + L-glutamate + ADP + phosphate + H(+). Its pathway is purine metabolism; IMP biosynthesis via de novo pathway; 5-amino-1-(5-phospho-D-ribosyl)imidazole from N(2)-formyl-N(1)-(5-phospho-D-ribosyl)glycinamide: step 1/2. Functionally, part of the phosphoribosylformylglycinamidine synthase complex involved in the purines biosynthetic pathway. Catalyzes the ATP-dependent conversion of formylglycinamide ribonucleotide (FGAR) and glutamine to yield formylglycinamidine ribonucleotide (FGAM) and glutamate. The FGAM synthase complex is composed of three subunits. PurQ produces an ammonia molecule by converting glutamine to glutamate. PurL transfers the ammonia molecule to FGAR to form FGAM in an ATP-dependent manner. PurS interacts with PurQ and PurL and is thought to assist in the transfer of the ammonia molecule from PurQ to PurL. In Bradyrhizobium sp. (strain ORS 278), this protein is Phosphoribosylformylglycinamidine synthase subunit PurL.